A 210-amino-acid chain; its full sequence is Protoporphyrinogen IX oxidase (210 aa).

5 consecutive transmembrane segments (helical) span residues 22–42 (WFKAFHLIGIVVWFAGLFYLV), 74–94 (YNIITTPGMVVTVAMAIGLIF), 103–123 (GWLHIKLTFVALLLLYHFYCG), 141–161 (FRALNEAPTILLVVIVLLAVF), and 165–185 (LPLDATTWLIVALVIAMAASI). Residue His27 coordinates heme. Residue Lys108 coordinates heme.

The protein belongs to the HemJ family. Homodimer. Can also form higher oligomers, most probably tetramers. Interacts with Sll1106, however it is unlikely that Sll1106 is required for PPO function. Requires heme b as cofactor.

It localises to the cell membrane. It catalyses the reaction protoporphyrinogen IX + 3 A = protoporphyrin IX + 3 AH2. It participates in porphyrin-containing compound metabolism; protoporphyrin-IX biosynthesis; protoporphyrin-IX from protoporphyrinogen-IX: step 1/1. In terms of biological role, catalyzes the oxidation of protoporphyrinogen IX to protoporphyrin IX. Is involved in the biosynthesis of tetrapyrrole molecules like heme and chlorophyll. Does not use oxygen or artificial electron acceptors such as menadione or benzoquinone. Is functionally coupled with coproporphyrinogen III oxidase (CPO). Is essential for growth. The polypeptide is Protoporphyrinogen IX oxidase (Synechocystis sp. (strain ATCC 27184 / PCC 6803 / Kazusa)).